The following is a 215-amino-acid chain: Pyrrolidone-carboxylate peptidase (215 aa).

Active-site residues include E80, C143, and H167.

Belongs to the peptidase C15 family. As to quaternary structure, homotetramer.

It localises to the cytoplasm. It carries out the reaction Release of an N-terminal pyroglutamyl group from a polypeptide, the second amino acid generally not being Pro.. Functionally, removes 5-oxoproline from various penultimate amino acid residues except L-proline. This is Pyrrolidone-carboxylate peptidase from Bacillus thuringiensis subsp. konkukian (strain 97-27).